We begin with the raw amino-acid sequence, 110 residues long: uncharacterized protein (110 aa).

The disordered stretch occupies residues 86-110 (SEEIDEPVMKKRHRRKGSPHRAPFF). A compositionally biased stretch (basic residues) spans 95 to 104 (KKRHRRKGSP).

This is an uncharacterized protein from Arabidopsis thaliana (Mouse-ear cress).